A 201-amino-acid polypeptide reads, in one-letter code: 3-isopropylmalate dehydratase small subunit (201 aa).

Belongs to the LeuD family. LeuD type 1 subfamily. In terms of assembly, heterodimer of LeuC and LeuD.

The enzyme catalyses (2R,3S)-3-isopropylmalate = (2S)-2-isopropylmalate. It functions in the pathway amino-acid biosynthesis; L-leucine biosynthesis; L-leucine from 3-methyl-2-oxobutanoate: step 2/4. Catalyzes the isomerization between 2-isopropylmalate and 3-isopropylmalate, via the formation of 2-isopropylmaleate. The chain is 3-isopropylmalate dehydratase small subunit from Shigella boydii serotype 18 (strain CDC 3083-94 / BS512).